The sequence spans 485 residues: Glycogen synthase (485 aa).

ADP-alpha-D-glucose is bound at residue Lys21.

Belongs to the glycosyltransferase 1 family. Bacterial/plant glycogen synthase subfamily.

It carries out the reaction [(1-&gt;4)-alpha-D-glucosyl](n) + ADP-alpha-D-glucose = [(1-&gt;4)-alpha-D-glucosyl](n+1) + ADP + H(+). It functions in the pathway glycan biosynthesis; glycogen biosynthesis. Its function is as follows. Synthesizes alpha-1,4-glucan chains using ADP-glucose. The protein is Glycogen synthase of Pseudomonas syringae pv. syringae (strain B728a).